The primary structure comprises 78 residues: Translation initiation factor IF-1, chloroplastic (78 aa).

The region spanning 1–72 (MKKQNLIDME…TKGRITYRLR (72 aa)) is the S1-like domain.

Belongs to the IF-1 family. Component of the 30S ribosomal translation pre-initiation complex which assembles on the 30S ribosome in the order IF-2 and IF-3, IF-1 and N-formylmethionyl-tRNA(fMet); mRNA recruitment can occur at any time during PIC assembly.

It is found in the plastid. The protein localises to the chloroplast. Its function is as follows. One of the essential components for the initiation of protein synthesis. Stabilizes the binding of IF-2 and IF-3 on the 30S subunit to which N-formylmethionyl-tRNA(fMet) subsequently binds. Helps modulate mRNA selection, yielding the 30S pre-initiation complex (PIC). Upon addition of the 50S ribosomal subunit IF-1, IF-2 and IF-3 are released leaving the mature 70S translation initiation complex. The sequence is that of Translation initiation factor IF-1, chloroplastic from Physcomitrium patens (Spreading-leaved earth moss).